The chain runs to 253 residues: DNA repair protein RecO (253 aa).

It belongs to the RecO family.

Involved in DNA repair and RecF pathway recombination. This Symbiobacterium thermophilum (strain DSM 24528 / JCM 14929 / IAM 14863 / T) protein is DNA repair protein RecO.